Here is an 835-residue protein sequence, read N- to C-terminus: Leucine--tRNA ligase (835 aa).

The 'HIGH' region signature appears at 36-46 (PYPSGKIHVGH). The 'KMSKS' region signature appears at 602-606 (KMSKS). Residue K605 coordinates ATP.

Belongs to the class-I aminoacyl-tRNA synthetase family.

It is found in the cytoplasm. The catalysed reaction is tRNA(Leu) + L-leucine + ATP = L-leucyl-tRNA(Leu) + AMP + diphosphate. This Rickettsia conorii (strain ATCC VR-613 / Malish 7) protein is Leucine--tRNA ligase.